Here is a 339-residue protein sequence, read N- to C-terminus: Holliday junction branch migration complex subunit RuvB (339 aa).

Residues 2 to 187 are large ATPase domain (RuvB-L); it reads KDVNDEERII…FGIIEHMQYY (186 aa). Residues Leu26, Arg27, Gly68, Lys71, Thr72, Thr73, 134 to 136, Arg177, Tyr187, and Arg224 contribute to the ATP site; that span reads EDF. A Mg(2+)-binding site is contributed by Thr72. The interval 188 to 258 is small ATPAse domain (RuvB-S); it reads SIDDLEKIIQ…TTKHSLHLLE (71 aa). A head domain (RuvB-H) region spans residues 261-339; sequence DEGLDQTDRK…QLGYPPKKAE (79 aa). Residues Arg316 and Arg321 each coordinate DNA.

It belongs to the RuvB family. Homohexamer. Forms an RuvA(8)-RuvB(12)-Holliday junction (HJ) complex. HJ DNA is sandwiched between 2 RuvA tetramers; dsDNA enters through RuvA and exits via RuvB. An RuvB hexamer assembles on each DNA strand where it exits the tetramer. Each RuvB hexamer is contacted by two RuvA subunits (via domain III) on 2 adjacent RuvB subunits; this complex drives branch migration. In the full resolvosome a probable DNA-RuvA(4)-RuvB(12)-RuvC(2) complex forms which resolves the HJ.

Its subcellular location is the cytoplasm. It catalyses the reaction ATP + H2O = ADP + phosphate + H(+). The RuvA-RuvB-RuvC complex processes Holliday junction (HJ) DNA during genetic recombination and DNA repair, while the RuvA-RuvB complex plays an important role in the rescue of blocked DNA replication forks via replication fork reversal (RFR). RuvA specifically binds to HJ cruciform DNA, conferring on it an open structure. The RuvB hexamer acts as an ATP-dependent pump, pulling dsDNA into and through the RuvAB complex. RuvB forms 2 homohexamers on either side of HJ DNA bound by 1 or 2 RuvA tetramers; 4 subunits per hexamer contact DNA at a time. Coordinated motions by a converter formed by DNA-disengaged RuvB subunits stimulates ATP hydrolysis and nucleotide exchange. Immobilization of the converter enables RuvB to convert the ATP-contained energy into a lever motion, pulling 2 nucleotides of DNA out of the RuvA tetramer per ATP hydrolyzed, thus driving DNA branch migration. The RuvB motors rotate together with the DNA substrate, which together with the progressing nucleotide cycle form the mechanistic basis for DNA recombination by continuous HJ branch migration. Branch migration allows RuvC to scan DNA until it finds its consensus sequence, where it cleaves and resolves cruciform DNA. This chain is Holliday junction branch migration complex subunit RuvB, found in Lactobacillus gasseri (strain ATCC 33323 / DSM 20243 / BCRC 14619 / CIP 102991 / JCM 1131 / KCTC 3163 / NCIMB 11718 / NCTC 13722 / AM63).